The primary structure comprises 81 residues: ATP synthase subunit c, chloroplastic (81 aa).

The next 2 helical transmembrane spans lie at 4–24 (VISAASVIAAGLAVGLASIGP) and 57–77 (LAFMEALTIYGLVVALALLFA).

The protein belongs to the ATPase C chain family. As to quaternary structure, F-type ATPases have 2 components, F(1) - the catalytic core - and F(0) - the membrane proton channel. F(1) has five subunits: alpha(3), beta(3), gamma(1), delta(1), epsilon(1). F(0) has four main subunits: a(1), b(1), b'(1) and c(10-14). The alpha and beta chains form an alternating ring which encloses part of the gamma chain. F(1) is attached to F(0) by a central stalk formed by the gamma and epsilon chains, while a peripheral stalk is formed by the delta, b and b' chains.

It is found in the plastid. It localises to the chloroplast thylakoid membrane. F(1)F(0) ATP synthase produces ATP from ADP in the presence of a proton or sodium gradient. F-type ATPases consist of two structural domains, F(1) containing the extramembraneous catalytic core and F(0) containing the membrane proton channel, linked together by a central stalk and a peripheral stalk. During catalysis, ATP synthesis in the catalytic domain of F(1) is coupled via a rotary mechanism of the central stalk subunits to proton translocation. In terms of biological role, key component of the F(0) channel; it plays a direct role in translocation across the membrane. A homomeric c-ring of between 10-14 subunits forms the central stalk rotor element with the F(1) delta and epsilon subunits. The chain is ATP synthase subunit c, chloroplastic from Zygnema circumcarinatum (Green alga).